We begin with the raw amino-acid sequence, 72 residues long: Penaeidin-2b (72 aa).

An N-terminal signal peptide occupies residues 1–21; the sequence is MRLVVCLVFLASFALVCQGEA. Disulfide bonds link cysteine 45/cysteine 59, cysteine 48/cysteine 66, and cysteine 60/cysteine 67. At lysine 71 the chain carries Lysine amide.

Belongs to the penaeidin family.

Its subcellular location is the cytoplasmic granule. Its function is as follows. Antibacterial and antifungal activity. Presents chitin-binding activity. This is Penaeidin-2b from Penaeus vannamei (Whiteleg shrimp).